The chain runs to 927 residues: Probable UDP-N-acetylglucosamine--peptide N-acetylglucosaminyltransferase SPINDLY (927 aa).

A disordered region spans residues Met1–Gln31. TPR repeat units follow at residues Gly34 to Asn67, Val68 to Asn101, Ala102 to Tyr135, Ala143 to Tyr176, Ala177 to Tyr210, Ala211 to Phe244, Ala252 to Tyr285, Ala286 to Cys319, Ala320 to Phe353, Gln355 to Tyr387, and Ala388 to Ser421. The tract at residues Arg422 to Arg927 is catalytic region.

It belongs to the glycosyltransferase 41 family. O-GlcNAc transferase subfamily.

It localises to the nucleus. It carries out the reaction L-seryl-[protein] + UDP-N-acetyl-alpha-D-glucosamine = 3-O-(N-acetyl-beta-D-glucosaminyl)-L-seryl-[protein] + UDP + H(+). It catalyses the reaction L-threonyl-[protein] + UDP-N-acetyl-alpha-D-glucosamine = 3-O-(N-acetyl-beta-D-glucosaminyl)-L-threonyl-[protein] + UDP + H(+). It functions in the pathway protein modification; protein glycosylation. Functionally, probable O-linked N-acetylglucosamine transferase (OGT) involved in various processes such as gibberellin (GA) signaling pathway. OGTs catalyze the addition of nucleotide-activated sugars directly onto the polypeptide through O-glycosidic linkage with the hydroxyl of serine or threonine. Probably acts by adding O-linked sugars to yet unknown proteins. The chain is Probable UDP-N-acetylglucosamine--peptide N-acetylglucosaminyltransferase SPINDLY (SPY) from Oryza sativa subsp. japonica (Rice).